A 475-amino-acid polypeptide reads, in one-letter code: Ribulose bisphosphate carboxylase large chain (475 aa).

Positions 1–2 are excised as a propeptide; sequence MA. Proline 3 is subject to N-acetylproline. An N6,N6,N6-trimethyllysine modification is found at lysine 14. Substrate-binding residues include asparagine 123 and threonine 173. The Proton acceptor role is filled by lysine 175. A substrate-binding site is contributed by lysine 177. 3 residues coordinate Mg(2+): lysine 201, aspartate 203, and glutamate 204. Lysine 201 carries the N6-carboxylysine modification. Histidine 294 (proton acceptor) is an active-site residue. Substrate-binding residues include arginine 295, histidine 327, and serine 379.

Belongs to the RuBisCO large chain family. Type I subfamily. In terms of assembly, heterohexadecamer of 8 large chains and 8 small chains. It depends on Mg(2+) as a cofactor.

Its subcellular location is the plastid. It is found in the chloroplast. It carries out the reaction 2 (2R)-3-phosphoglycerate + 2 H(+) = D-ribulose 1,5-bisphosphate + CO2 + H2O. It catalyses the reaction D-ribulose 1,5-bisphosphate + O2 = 2-phosphoglycolate + (2R)-3-phosphoglycerate + 2 H(+). Its function is as follows. RuBisCO catalyzes two reactions: the carboxylation of D-ribulose 1,5-bisphosphate, the primary event in carbon dioxide fixation, as well as the oxidative fragmentation of the pentose substrate in the photorespiration process. Both reactions occur simultaneously and in competition at the same active site. This is Ribulose bisphosphate carboxylase large chain from Nephroselmis olivacea (Green alga).